We begin with the raw amino-acid sequence, 386 residues long: S-adenosylmethionine synthase (386 aa).

His-14 contacts ATP. Asp-16 contacts Mg(2+). Residue Glu-42 coordinates K(+). Glu-55 and Gln-98 together coordinate L-methionine. Residues 98–108 (QSGDISQGVDG) form a flexible loop region. Residues 162–164 (DSK), 230–231 (RF), Asp-239, 245–246 (RK), Ala-262, and Lys-266 each bind ATP. Position 239 (Asp-239) interacts with L-methionine. Residue Lys-270 participates in L-methionine binding.

The protein belongs to the AdoMet synthase family. In terms of assembly, homotetramer; dimer of dimers. Mg(2+) is required as a cofactor. K(+) serves as cofactor.

It localises to the cytoplasm. It catalyses the reaction L-methionine + ATP + H2O = S-adenosyl-L-methionine + phosphate + diphosphate. Its pathway is amino-acid biosynthesis; S-adenosyl-L-methionine biosynthesis; S-adenosyl-L-methionine from L-methionine: step 1/1. Catalyzes the formation of S-adenosylmethionine (AdoMet) from methionine and ATP. The overall synthetic reaction is composed of two sequential steps, AdoMet formation and the subsequent tripolyphosphate hydrolysis which occurs prior to release of AdoMet from the enzyme. This Salinibacter ruber (strain DSM 13855 / M31) protein is S-adenosylmethionine synthase.